A 401-amino-acid chain; its full sequence is Adaptive-response sensory kinase SasA (401 aa).

The Histidine kinase domain maps to 175-400; it reads MLVHDLRNPL…WFHFTLPVYP (226 aa). Position 178 is a phosphohistidine; by autocatalysis (histidine 178).

Homooligomerizes. Interacts with KaiC. Participates in the KaiABC clock complex, whose core is composed of a KaiC homohexamer, 6 KaiB and up to 6 KaiA dimers. SasA and KaiB(fs) compete to bind to KaiC.

It carries out the reaction ATP + protein L-histidine = ADP + protein N-phospho-L-histidine.. Member of the two-component regulatory system SasA/RpaA involved in genome-wide circadian gene expression. One of several clock output pathways. Participates in the Kai clock protein complex, the main circadian regulator in cyanobacteria, via its interaction with KaiC. KaiC enhances the autophosphorylation activity of SasA, which then transfers its phosphate group to RpaA to activate it. In addition to its output function, recruits fold-shifted KaiB (KaiB(fs)) to KaiC to cooperatively form the KaiB(6):KaiC(6) complex (independent of SasA kinase activity). Required for robustness of the circadian rhythm of gene expression and is involved in clock output, also required for adaptation to light/dark cycles. This Trichormus variabilis (strain ATCC 29413 / PCC 7937) (Anabaena variabilis) protein is Adaptive-response sensory kinase SasA.